A 509-amino-acid polypeptide reads, in one-letter code: Glycogen synthase (509 aa).

Lys47 provides a ligand contact to ADP-alpha-D-glucose.

This sequence belongs to the glycosyltransferase 1 family. Bacterial/plant glycogen synthase subfamily.

The enzyme catalyses [(1-&gt;4)-alpha-D-glucosyl](n) + ADP-alpha-D-glucose = [(1-&gt;4)-alpha-D-glucosyl](n+1) + ADP + H(+). It participates in glycan biosynthesis; glycogen biosynthesis. Synthesizes alpha-1,4-glucan chains using ADP-glucose. The sequence is that of Glycogen synthase from Xanthomonas oryzae pv. oryzae (strain MAFF 311018).